The chain runs to 987 residues: Transposase for transposon Tn4430 (987 aa).

The protein belongs to the transposase 7 family.

Functionally, required for transposition of transposon Tn4430. The chain is Transposase for transposon Tn4430 (tnpA) from Bacillus thuringiensis.